The primary structure comprises 181 residues: Oligoribonuclease (181 aa).

In terms of domain architecture, Exonuclease spans 8–171 (LIWIDLEMTG…DDIRESVAEL (164 aa)). The active site involves Y129.

The protein belongs to the oligoribonuclease family.

The protein localises to the cytoplasm. In terms of biological role, 3'-to-5' exoribonuclease specific for small oligoribonucleotides. This chain is Oligoribonuclease, found in Yersinia pseudotuberculosis serotype O:1b (strain IP 31758).